The chain runs to 432 residues: Homogentisate 1,2-dioxygenase (432 aa).

Histidine 286 serves as the catalytic Proton acceptor. Residues histidine 329 and glutamate 335 each contribute to the Fe cation site. Homogentisate-binding residues include tyrosine 344 and histidine 365. Histidine 365 is a binding site for Fe cation.

This sequence belongs to the homogentisate dioxygenase family. In terms of assembly, hexamer; dimer of trimers. It depends on Fe cation as a cofactor.

It carries out the reaction homogentisate + O2 = 4-maleylacetoacetate + H(+). It functions in the pathway amino-acid degradation; L-phenylalanine degradation; acetoacetate and fumarate from L-phenylalanine: step 4/6. Involved in the catabolism of homogentisate (2,5-dihydroxyphenylacetate or 2,5-OH-PhAc), a central intermediate in the degradation of phenylalanine and tyrosine. Catalyzes the oxidative ring cleavage of the aromatic ring of homogentisate to yield maleylacetoacetate. In Bordetella pertussis (strain Tohama I / ATCC BAA-589 / NCTC 13251), this protein is Homogentisate 1,2-dioxygenase.